The following is a 194-amino-acid chain: Putative 3-methyladenine DNA glycosylase (194 aa).

The protein belongs to the DNA glycosylase MPG family.

This is Putative 3-methyladenine DNA glycosylase from Aeropyrum pernix (strain ATCC 700893 / DSM 11879 / JCM 9820 / NBRC 100138 / K1).